Consider the following 1305-residue polypeptide: Cyclin-G-associated kinase (1305 aa).

S2 is subject to N-acetylserine. 2 positions are modified to phosphoserine: S2 and S16. The Protein kinase domain maps to 40–315 (LRVRRVLAEG…IAEVVRQLQE (276 aa)). D173 acts as the Proton acceptor in catalysis. Residues 332–354 (LEQNGGYGNSGPSRAQPPSGGPV) form a disordered region. In terms of domain architecture, Phosphatase tensin-type spans 397–564 (SVANYAKGDL…EYVCDMVAEE (168 aa)). At S454 the chain carries Phosphoserine. The C2 tensin-type domain occupies 570–708 (SKPMLVKSVV…FQVNLEVEVE (139 aa)). The interval 747-856 (FGKPELPRQP…TPRLAAGTRQ (110 aa)) is disordered. Residue S768 is modified to Phosphoserine. T774 is subject to Phosphothreonine. The span at 776 to 789 (SDSPQSSSTDTNHF) shows a compositional bias: polar residues. Position 781 is a phosphoserine (S781). T792 bears the Phosphothreonine mark. Residues 805-817 (VDNTSPKESQSNL) are compositionally biased toward polar residues. Phosphoserine is present on residues S809, S824, and S827. Residues 822 to 832 (DGSEVSDEEEA) show a composition bias toward acidic residues. Residues 836 to 848 (SEERKPGAGEDTP) show a composition bias toward basic and acidic residues. Phosphoserine is present on S938. The tract at residues 1044 to 1141 (LPGPASMPVP…PQAKPAPRAS (98 aa)) is disordered. The span at 1105–1131 (VGTSATTHKSNSSWQTTRPTAPGTSWP) shows a compositional bias: polar residues. R1122 bears the Omega-N-methylarginine mark. S1171 is subject to Phosphoserine. One can recognise a J domain in the interval 1241–1305 (SRWTPVSMAD…FENQGSRPLF (65 aa)).

Belongs to the protein kinase superfamily. Ser/Thr protein kinase family.

The protein localises to the cytoplasm. The protein resides in the perinuclear region. It localises to the golgi apparatus. It is found in the trans-Golgi network. Its subcellular location is the cell junction. The protein localises to the focal adhesion. The protein resides in the cytoplasmic vesicle. It localises to the clathrin-coated vesicle. It catalyses the reaction L-seryl-[protein] + ATP = O-phospho-L-seryl-[protein] + ADP + H(+). The catalysed reaction is L-threonyl-[protein] + ATP = O-phospho-L-threonyl-[protein] + ADP + H(+). In terms of biological role, associates with cyclin G and CDK5. Seems to act as an auxilin homolog that is involved in the uncoating of clathrin-coated vesicles by Hsc70 in non-neuronal cells. Expression oscillates slightly during the cell cycle, peaking at G1. May play a role in clathrin-mediated endocytosis and intracellular trafficking, and in the dynamics of clathrin assembly/disassembly. This is Cyclin-G-associated kinase from Rattus norvegicus (Rat).